The chain runs to 451 residues: tRNA-2-methylthio-N(6)-dimethylallyladenosine synthase (451 aa).

Positions 2–119 (QNLYIKTYGC…LPDLLDACLA (118 aa)) constitute an MTTase N-terminal domain. [4Fe-4S] cluster is bound by residues C11, C48, C82, C157, C161, and C164. The 235-residue stretch at 143–377 (GRDGATAFVT…RINGLAQGYA (235 aa)) folds into the Radical SAM core domain. Residues 378 to 441 (QALVGTQQAV…PNSLRGRAAL (64 aa)) enclose the TRAM domain.

This sequence belongs to the methylthiotransferase family. MiaB subfamily. In terms of assembly, monomer. It depends on [4Fe-4S] cluster as a cofactor.

The protein resides in the cytoplasm. It catalyses the reaction N(6)-dimethylallyladenosine(37) in tRNA + (sulfur carrier)-SH + AH2 + 2 S-adenosyl-L-methionine = 2-methylsulfanyl-N(6)-dimethylallyladenosine(37) in tRNA + (sulfur carrier)-H + 5'-deoxyadenosine + L-methionine + A + S-adenosyl-L-homocysteine + 2 H(+). Its function is as follows. Catalyzes the methylthiolation of N6-(dimethylallyl)adenosine (i(6)A), leading to the formation of 2-methylthio-N6-(dimethylallyl)adenosine (ms(2)i(6)A) at position 37 in tRNAs that read codons beginning with uridine. The polypeptide is tRNA-2-methylthio-N(6)-dimethylallyladenosine synthase (Acidithiobacillus ferrooxidans (strain ATCC 23270 / DSM 14882 / CIP 104768 / NCIMB 8455) (Ferrobacillus ferrooxidans (strain ATCC 23270))).